Here is a 97-residue protein sequence, read N- to C-terminus: Integration host factor subunit alpha (97 aa).

This sequence belongs to the bacterial histone-like protein family. As to quaternary structure, heterodimer of an alpha and a beta chain.

In terms of biological role, this protein is one of the two subunits of integration host factor, a specific DNA-binding protein that functions in genetic recombination as well as in transcriptional and translational control. The sequence is that of Integration host factor subunit alpha from Colwellia psychrerythraea (strain 34H / ATCC BAA-681) (Vibrio psychroerythus).